Consider the following 157-residue polypeptide: 2-C-methyl-D-erythritol 2,4-cyclodiphosphate synthase (157 aa).

Asp8 and His10 together coordinate a divalent metal cation. 4-CDP-2-C-methyl-D-erythritol 2-phosphate-binding positions include 8–10 (DVH) and 34–35 (HS). His42 contacts a divalent metal cation. 4-CDP-2-C-methyl-D-erythritol 2-phosphate is bound by residues 56–58 (DIG), 61–65 (FPDTD), 100–106 (AQAPKMA), 132–135 (TTTE), Phe139, and Arg142.

It belongs to the IspF family. Homotrimer. A divalent metal cation is required as a cofactor.

The enzyme catalyses 4-CDP-2-C-methyl-D-erythritol 2-phosphate = 2-C-methyl-D-erythritol 2,4-cyclic diphosphate + CMP. The protein operates within isoprenoid biosynthesis; isopentenyl diphosphate biosynthesis via DXP pathway; isopentenyl diphosphate from 1-deoxy-D-xylulose 5-phosphate: step 4/6. Functionally, involved in the biosynthesis of isopentenyl diphosphate (IPP) and dimethylallyl diphosphate (DMAPP), two major building blocks of isoprenoid compounds. Catalyzes the conversion of 4-diphosphocytidyl-2-C-methyl-D-erythritol 2-phosphate (CDP-ME2P) to 2-C-methyl-D-erythritol 2,4-cyclodiphosphate (ME-CPP) with a corresponding release of cytidine 5-monophosphate (CMP). This Stutzerimonas stutzeri (strain A1501) (Pseudomonas stutzeri) protein is 2-C-methyl-D-erythritol 2,4-cyclodiphosphate synthase.